Consider the following 311-residue polypeptide: DNA replication terminus site-binding protein (311 aa).

This sequence belongs to the Tus family.

It localises to the cytoplasm. In terms of biological role, trans-acting protein required for termination of DNA replication. Binds to DNA replication terminator sequences (terA to terF) to prevent the passage of replication forks. The termination efficiency will be affected by the affinity of this protein for the terminator sequence. This is DNA replication terminus site-binding protein from Yersinia pestis.